Consider the following 95-residue polypeptide: Protein translocase subunit SecE (95 aa).

The tract at residues 1–35 is disordered; that stretch reads MTDAVGSIDMPDAEDEAPESKKKSRKGGKRGKKGP. Basic residues predominate over residues 22-35; it reads KKSRKGGKRGKKGP. Residues 67–87 form a helical membrane-spanning segment; the sequence is VVIVFVVVMIGLVTVLDIGFA.

This sequence belongs to the SecE/SEC61-gamma family. Component of the Sec protein translocase complex. Heterotrimer consisting of SecY, SecE and SecG subunits. The heterotrimers can form oligomers, although 1 heterotrimer is thought to be able to translocate proteins. Interacts with the ribosome. Interacts with SecDF, and other proteins may be involved. Interacts with SecA.

The protein resides in the cell membrane. Essential subunit of the Sec protein translocation channel SecYEG. Clamps together the 2 halves of SecY. May contact the channel plug during translocation. The chain is Protein translocase subunit SecE from Streptomyces griseus.